Consider the following 364-residue polypeptide: Histidinol-phosphate aminotransferase (364 aa).

N6-(pyridoxal phosphate)lysine is present on lysine 224.

This sequence belongs to the class-II pyridoxal-phosphate-dependent aminotransferase family. Histidinol-phosphate aminotransferase subfamily. As to quaternary structure, homodimer. Pyridoxal 5'-phosphate serves as cofactor.

It carries out the reaction L-histidinol phosphate + 2-oxoglutarate = 3-(imidazol-4-yl)-2-oxopropyl phosphate + L-glutamate. The protein operates within amino-acid biosynthesis; L-histidine biosynthesis; L-histidine from 5-phospho-alpha-D-ribose 1-diphosphate: step 7/9. The polypeptide is Histidinol-phosphate aminotransferase (Anaeromyxobacter sp. (strain Fw109-5)).